Here is a 381-residue protein sequence, read N- to C-terminus: Adenylate cyclase (381 aa).

The tract at residues 1–30 is disordered; the sequence is MTVDDTGSGADGDGRVDPEPAPDSADPGED. One can recognise a Guanylate cyclase domain in the interval 191 to 300; it reads AVGFADLVGF…TTVNLASRLT (110 aa). Mg(2+) is bound by residues Asp196 and Asp240.

Belongs to the adenylyl cyclase class-3 family. Mg(2+) is required as a cofactor.

The enzyme catalyses ATP = 3',5'-cyclic AMP + diphosphate. The protein is Adenylate cyclase (cya) of Streptomyces coelicolor (strain ATCC BAA-471 / A3(2) / M145).